A 75-amino-acid chain; its full sequence is Metallothionein-like protein 1 (75 aa).

It belongs to the metallothionein superfamily. Type 15 family.

Functionally, metallothioneins have a high content of cysteine residues that bind various heavy metals. The polypeptide is Metallothionein-like protein 1 (MTA) (Pisum sativum (Garden pea)).